A 220-amino-acid polypeptide reads, in one-letter code: Iron-sulfur cluster repair protein YtfE (220 aa).

It belongs to the RIC family. YtfE subfamily. In terms of assembly, homodimer.

It is found in the cytoplasm. Functionally, di-iron-containing protein involved in the repair of iron-sulfur clusters damaged by oxidative and nitrosative stress conditions. This is Iron-sulfur cluster repair protein YtfE from Salmonella choleraesuis (strain SC-B67).